The primary structure comprises 422 residues: ATP phosphoribosyltransferase regulatory subunit (422 aa).

Belongs to the class-II aminoacyl-tRNA synthetase family. HisZ subfamily. As to quaternary structure, heteromultimer composed of HisG and HisZ subunits.

The protein resides in the cytoplasm. The protein operates within amino-acid biosynthesis; L-histidine biosynthesis; L-histidine from 5-phospho-alpha-D-ribose 1-diphosphate: step 1/9. Functionally, required for the first step of histidine biosynthesis. May allow the feedback regulation of ATP phosphoribosyltransferase activity by histidine. This chain is ATP phosphoribosyltransferase regulatory subunit, found in Clostridium botulinum (strain 657 / Type Ba4).